A 167-amino-acid chain; its full sequence is Iron-sulfur cluster assembly enzyme ISCU (167 aa).

A mitochondrion-targeting transit peptide spans Met-1–Leu-34. The residue at position 14 (Ser-14) is a Phosphoserine; by MTOR. Pro-46 provides a ligand contact to Zn(2+). Cys-69 (cysteine persulfide intermediate) is an active-site residue. Cys-69 bears the Cysteine persulfide mark. Zn(2+)-binding residues include Gly-70, Asp-71, Cys-95, Lys-112, and Cys-138. Catalysis depends on Cys-138, which acts as the Cysteine persulfide intermediate. Cys-138 carries the post-translational modification Cysteine persulfide.

This sequence belongs to the NifU family. Homodimer; Tyr-35-mediated dimerization of two iron- and sulfide-containing ISCU subunit bind to the cysteine desulfurase complex. Component of the mitochondrial core iron-sulfur cluster (ISC) complex composed of NFS1, LYRM4, NDUFAB1, ISCU, FXN, and FDX2; this complex is an heterohexamer containing two copies of each monomer. Interacts (D-state) with NFS1 (homodimer form); each monomer interacts with the C-terminal regions of each NFS1 monomer. Interacts (monomer form) with FXN (via ferrous form); the interaction is possible when both are bound to the dimeric form of the cysteine desulfurase complex (NFS1:LYRM4) and enhances FXN interaction to the dimeric form of the cysteine desulfurase complex (NFS1:LYRM4). Interacts with GLRX5. Interacts (D-state) with HSPA9. Interacts (S-state) with HSCB; this interaction stimulates the ATPase activity of HSPA9. As to quaternary structure, component of the cytoplasmic core iron-sulfur cluster (ISC) complex composed at least of NFS1, LYRM4, and ISCU; this complex interacts with FXN. Monomer; each monomer binds to the C-terminal regions of NFS1 (cytoplasmic and homodimer form). Interacts with NFS1 (cytoplasmic and homodimer form); this interaction promotes de novo iron-sulfur cluster formation. Interacts with HSCB (cytoplasmic form); this interaction stabilizes the (Fe-S) clusters on ISCU. In terms of processing, phosphorylation at Ser-14 is required for ISCU protein stabilization in the cytosol, whereas dephosphorylation of Ser-14, due to the inhibition of mTORC1 (mammalian target of rapamycin complex 1) complex, leads to degradation of the precursor form and ultimately to a decrease in the mitochondrial mature form. Cysteine persulfide is reduced by thiol-containing molecules such as glutathione and L-cysteine. In terms of tissue distribution, detected in heart, liver, skeletal muscle, brain, pancreas, kidney, lung and placenta.

It is found in the mitochondrion. The protein resides in the cytoplasm. It localises to the nucleus. In terms of biological role, mitochondrial scaffold protein, of the core iron-sulfur cluster (ISC) assembly complex, that provides the structural architecture on which the [2Fe-2S] clusters are assembled. The core iron-sulfur cluster (ISC) assembly complex is involved in the de novo synthesis of a [2Fe-2S] cluster, the first step of the mitochondrial iron-sulfur protein biogenesis. This process is initiated by the cysteine desulfurase complex (NFS1:LYRM4:NDUFAB1) that produces persulfide which is delivered on the scaffold protein ISCU in a FXN-dependent manner. Then this complex is stabilized by FDX2 which provides reducing equivalents to accomplish the [2Fe-2S] cluster assembly. Finally, the [2Fe-2S] cluster is transferred from ISCU to chaperone proteins, including HSCB, HSPA9 and GLRX5. Exists as two slow interchanging conformational states, a structured (S) and disordered (D) form. May modulate NFS1 desulfurase activity in a zinc-dependent manner. Modulates the interaction between FXN and the cysteine desulfurase complex. Functionally, cytoplasmic scaffold protein, of the cytoplasmic core iron-sulfur cluster (ISC) assembly complex that provides the structural architecture on which the Fe-S clusters are assembled and may be involved in the cytoplasmic iron-sulfur protein biogenesis. This chain is Iron-sulfur cluster assembly enzyme ISCU, found in Homo sapiens (Human).